The primary structure comprises 129 residues: Small ribosomal subunit protein uS11 (129 aa).

Belongs to the universal ribosomal protein uS11 family. Part of the 30S ribosomal subunit. Interacts with proteins S7 and S18. Binds to IF-3.

Functionally, located on the platform of the 30S subunit, it bridges several disparate RNA helices of the 16S rRNA. Forms part of the Shine-Dalgarno cleft in the 70S ribosome. This is Small ribosomal subunit protein uS11 from Rhizorhabdus wittichii (strain DSM 6014 / CCUG 31198 / JCM 15750 / NBRC 105917 / EY 4224 / RW1) (Sphingomonas wittichii).